Reading from the N-terminus, the 118-residue chain is Large ribosomal subunit protein bL19 (118 aa).

It belongs to the bacterial ribosomal protein bL19 family.

In terms of biological role, this protein is located at the 30S-50S ribosomal subunit interface and may play a role in the structure and function of the aminoacyl-tRNA binding site. The chain is Large ribosomal subunit protein bL19 from Buchnera aphidicola subsp. Baizongia pistaciae (strain Bp).